Consider the following 57-residue polypeptide: uncharacterized protein (57 aa).

The tract at residues 1–57 is disordered; sequence MDDTLPKQMTPTDTSPLKEEQAHCNNKTLENQPKNINDNKCTDSQNTDLQNTEPSKV. Residues 23 to 57 show a composition bias toward polar residues; sequence HCNNKTLENQPKNINDNKCTDSQNTDLQNTEPSKV.

This is an uncharacterized protein from Ornithodoros (relapsing fever ticks).